The chain runs to 363 residues: Phosphoserine aminotransferase (363 aa).

Arg-42 provides a ligand contact to L-glutamate. Residues 76 to 77 (GR), Trp-102, Thr-156, Asp-175, and Gln-198 each bind pyridoxal 5'-phosphate. Lys-199 carries the N6-(pyridoxal phosphate)lysine modification. Position 240–241 (240–241 (NT)) interacts with pyridoxal 5'-phosphate.

It belongs to the class-V pyridoxal-phosphate-dependent aminotransferase family. SerC subfamily. In terms of assembly, homodimer. Pyridoxal 5'-phosphate is required as a cofactor.

It is found in the cytoplasm. It catalyses the reaction O-phospho-L-serine + 2-oxoglutarate = 3-phosphooxypyruvate + L-glutamate. It carries out the reaction 4-(phosphooxy)-L-threonine + 2-oxoglutarate = (R)-3-hydroxy-2-oxo-4-phosphooxybutanoate + L-glutamate. It participates in amino-acid biosynthesis; L-serine biosynthesis; L-serine from 3-phospho-D-glycerate: step 2/3. The protein operates within cofactor biosynthesis; pyridoxine 5'-phosphate biosynthesis; pyridoxine 5'-phosphate from D-erythrose 4-phosphate: step 3/5. Catalyzes the reversible conversion of 3-phosphohydroxypyruvate to phosphoserine and of 3-hydroxy-2-oxo-4-phosphonooxybutanoate to phosphohydroxythreonine. In Shewanella baltica (strain OS223), this protein is Phosphoserine aminotransferase.